A 191-amino-acid polypeptide reads, in one-letter code: Protein LIGHT-DEPENDENT SHORT HYPOCOTYLS 9 (191 aa).

The segment covering Met-1–Asp-14 has biased composition (basic and acidic residues). Disordered regions lie at residues Met-1–Gln-41 and Gln-153–Thr-191. One can recognise an ALOG domain in the interval Arg-37–Lys-165. A compositionally biased stretch (basic residues) spans Pro-160 to Thr-169. Residues Lys-163–Arg-167 carry the Nuclear localization signal motif. The segment covering Ala-181 to Thr-191 has biased composition (polar residues).

Belongs to the plant homeotic and developmental regulators ALOG protein family.

It localises to the nucleus. Its function is as follows. Probable transcription regulator that acts as a developmental regulator by promoting cell growth in response to light. This is Protein LIGHT-DEPENDENT SHORT HYPOCOTYLS 9 (LSH9) from Arabidopsis thaliana (Mouse-ear cress).